Here is a 692-residue protein sequence, read N- to C-terminus: Translation initiation factor IF-2 (692 aa).

Positions 194–363 (PRPPIVTVMG…LLVAEMEDLK (170 aa)) constitute a tr-type G domain. The tract at residues 203–210 (GHVDHGKT) is G1. Residue 203–210 (GHVDHGKT) participates in GTP binding. The interval 228-232 (GITQH) is G2. The segment at 249–252 (DTPG) is G3. Residues 249–253 (DTPGH) and 303–306 (NKID) each bind GTP. The interval 303 to 306 (NKID) is G4. A G5 region spans residues 339-341 (SAK).

This sequence belongs to the TRAFAC class translation factor GTPase superfamily. Classic translation factor GTPase family. IF-2 subfamily.

It localises to the cytoplasm. Functionally, one of the essential components for the initiation of protein synthesis. Protects formylmethionyl-tRNA from spontaneous hydrolysis and promotes its binding to the 30S ribosomal subunits. Also involved in the hydrolysis of GTP during the formation of the 70S ribosomal complex. The chain is Translation initiation factor IF-2 from Thermoanaerobacter sp. (strain X514).